Reading from the N-terminus, the 345-residue chain is Dimethyladenosine transferase 1, mitochondrial (345 aa).

The N-terminal 27 residues, 1-27, are a transit peptide targeting the mitochondrion; the sequence is MAASGKLGTFRLPPLPTIREIIKLFGL. Positions 38, 63, 85, 86, 111, 112, and 141 each coordinate S-adenosyl-L-methionine.

Belongs to the class I-like SAM-binding methyltransferase superfamily. rRNA adenine N(6)-methyltransferase family. KsgA subfamily. As to quaternary structure, interacts with mitochondrial RNA polymerase POLRMT. Interacts with TFAM. Remains bound to the maturing mtSSU until the late stages of assembly. Ubiquitously expressed.

It localises to the mitochondrion. The enzyme catalyses adenosine(N)/adenosine(N+1) in rRNA + 4 S-adenosyl-L-methionine = N(6)-dimethyladenosine(N)/N(6)-dimethyladenosine(N+1) in rRNA + 4 S-adenosyl-L-homocysteine + 4 H(+). Functionally, mitochondrial methyltransferase which uses S-adenosyl methionine to dimethylate two highly conserved adjacent adenosine residues (A1006 and A1007) within the loop of helix 45 at the 3-prime end of 12S rRNA, thereby regulating the assembly or stability of the small subunit of the mitochondrial ribosome. Also required for basal transcription of mitochondrial DNA, probably via its interaction with POLRMT and TFAM. Stimulates transcription independently of the methyltransferase activity. This chain is Dimethyladenosine transferase 1, mitochondrial (Tfb1m), found in Mus musculus (Mouse).